Reading from the N-terminus, the 562-residue chain is Glucose-6-phosphate isomerase (562 aa).

The active-site Proton donor is glutamate 370. Catalysis depends on residues histidine 401 and lysine 526.

This sequence belongs to the GPI family.

The protein resides in the cytoplasm. The catalysed reaction is alpha-D-glucose 6-phosphate = beta-D-fructose 6-phosphate. It participates in carbohydrate biosynthesis; gluconeogenesis. Its pathway is carbohydrate degradation; glycolysis; D-glyceraldehyde 3-phosphate and glycerone phosphate from D-glucose: step 2/4. In terms of biological role, catalyzes the reversible isomerization of glucose-6-phosphate to fructose-6-phosphate. The protein is Glucose-6-phosphate isomerase of Deinococcus geothermalis (strain DSM 11300 / CIP 105573 / AG-3a).